A 760-amino-acid chain; its full sequence is Transferrin receptor protein 1 (760 aa).

Over 1-65 the chain is Cytoplasmic; sequence MMDQARSAFS…VTKPKRCGGS (65 aa). Residues 1–67 form a mediates interaction with SH3BP4 region; it reads MMDQARSAFS…KPKRCGGSIC (67 aa). Phosphoserine is present on residues Ser10 and Ser19. At Tyr20 the chain carries Phosphotyrosine. The short motif at 20–23 is the Endocytosis signal element; sequence YTRF. At Thr21 the chain carries Phosphothreonine. Phosphoserine is present on Ser24. The Stop-transfer sequence motif lies at 58–61; that stretch reads KPKR. S-palmitoyl cysteine attachment occurs at residues Cys62 and Cys67. A helical; Signal-anchor for type II membrane protein membrane pass occupies residues 66-86; the sequence is ICYGTIAVIIFFLIGFMIGYL. The Extracellular portion of the chain corresponds to 87–760; sequence GYCKGVEPKT…GDVWDIDNEF (674 aa). Positions 223–313 constitute a PA domain; the sequence is SKAATVTGKL…GTGDPYTPGF (91 aa). Residues Asn251 and Asn317 are each glycosylated (N-linked (GlcNAc...) asparagine). The interval 569-760 is ligand-binding; that stretch reads TMDTYKELTE…GDVWDIDNEF (192 aa). Residues 646-648 carry the Cell attachment site motif; sequence RGD. N-linked (GlcNAc...) asparagine glycans are attached at residues Asn722 and Asn727.

It belongs to the peptidase M28 family. M28B subfamily. As to quaternary structure, homodimer; disulfide-linked. Binds one transferrin or HFE molecule per subunit. Interacts with SH3BP4. Interacts with STEAP3; facilitates TFRC endocytosis in erythroid precursor cells. Post-translationally, stearoylated by ZDHHC6 which inhibits TFRC-mediated activation of the JNK pathway and promotes mitochondrial fragmentation. Stearoylation does not affect iron uptake.

The protein localises to the cell membrane. It localises to the melanosome. Functionally, cellular uptake of iron occurs via receptor-mediated endocytosis of ligand-occupied transferrin receptor into specialized endosomes. Endosomal acidification leads to iron release. The apotransferrin-receptor complex is then recycled to the cell surface with a return to neutral pH and the concomitant loss of affinity of apotransferrin for its receptor. Transferrin receptor is necessary for development of erythrocytes and the nervous system. Positively regulates T and B cell proliferation through iron uptake. Acts as a lipid sensor that regulates mitochondrial fusion by regulating activation of the JNK pathway. When dietary levels of stearate (C18:0) are low, promotes activation of the JNK pathway, resulting in HUWE1-mediated ubiquitination and subsequent degradation of the mitofusin MFN2 and inhibition of mitochondrial fusion. When dietary levels of stearate (C18:0) are high, TFRC stearoylation inhibits activation of the JNK pathway and thus degradation of the mitofusin MFN2. Mediates uptake of NICOL1 into fibroblasts where it may regulate extracellular matrix production. This Pongo abelii (Sumatran orangutan) protein is Transferrin receptor protein 1 (TFRC).